We begin with the raw amino-acid sequence, 94 residues long: Putative pterin-4-alpha-carbinolamine dehydratase (94 aa).

It belongs to the pterin-4-alpha-carbinolamine dehydratase family.

It catalyses the reaction (4aS,6R)-4a-hydroxy-L-erythro-5,6,7,8-tetrahydrobiopterin = (6R)-L-erythro-6,7-dihydrobiopterin + H2O. This Mycobacterium sp. (strain KMS) protein is Putative pterin-4-alpha-carbinolamine dehydratase.